Consider the following 665-residue polypeptide: LisH domain-containing protein ARMC9 (665 aa).

The LisH domain occupies 7–39; sequence HESELLGLVKEYLDFAEFEDTLKTFSKECKIKG. Positions 201–235 form a coiled coil; that stretch reads ENGQSNKEMLQQLHQQLVEAERRSMTYLKRYNKIQ. Position 582 is a phosphoserine (serine 582). The interval 642–665 is disordered; that stretch reads VQWSGDEPLQRPVTPGGHRNGYPV.

Interacts with TOGARAM1, CCDC66, CEP104, CSPP1 and CEP290. Interacts with NDUFAF2.

It localises to the cytoplasm. The protein resides in the cytoskeleton. Its subcellular location is the cilium basal body. The protein localises to the cell projection. It is found in the cilium. It localises to the microtubule organizing center. The protein resides in the centrosome. Its subcellular location is the centriole. Its function is as follows. Involved in ciliogenesis. It is required for appropriate acetylation and polyglutamylation of ciliary microtubules, and regulation of cilium length. Acts as a positive regulator of hedgehog (Hh)signaling. May participate in the trafficking and/or retention of GLI2 and GLI3 proteins at the ciliary tip. This is LisH domain-containing protein ARMC9 (ARMC9) from Pongo abelii (Sumatran orangutan).